The primary structure comprises 644 residues: Zinc transporter ZIP4 (644 aa).

The N-terminal stretch at 1-27 is a signal peptide; it reads MAILAWLEPRPLLAVLVLVLTMRMAQP. Residues 28–323 are Extracellular-facing; it reads AHLLTLLSSG…QNQLSQAEKY (296 aa). 3 disulfides stabilise this stretch: Cys-59–Cys-64, Cys-67–Cys-103, and Cys-153–Cys-188. The disordered stretch occupies residues 231–259; sequence TETHSDHHHQEKRVNRQGPTPLTAPNSSS. Basic and acidic residues predominate over residues 233-244; that stretch reads THSDHHHQEKRV. Residues 247-259 are compositionally biased toward polar residues; sequence QGPTPLTAPNSSS. Residues Cys-266 and Cys-305 are joined by a disulfide bond. A helical membrane pass occupies residues 324 to 344; the sequence is LYGSLATLLICLCSTFGLLLL. Residues 345–355 lie on the Cytoplasmic side of the membrane; it reads TCAACSTAAHY. The helical transmembrane segment at 356–376 threads the bilayer; the sequence is VIQTFLGMAVGALTGDALLHL. Residues 377 to 404 are Extracellular-facing; sequence TPKVLGLHQHGGDSEHRADSHGPQTTWR. The helical transmembrane segment at 405 to 425 threads the bilayer; it reads LVVALSGLYVFFLFEKLCDLL. Residues 426–495 are Cytoplasmic-facing; sequence LPQDPEDRKG…KSPELRLLPY (70 aa). Residues 449 to 451 carry the Essential for SLC39A4 endocytosis motif; that stretch reads LQL. Over residues 456–467 the composition is skewed to basic and acidic residues; that stretch reads LRPPKQPHEGSR. The disordered stretch occupies residues 456–484; that stretch reads LRPPKQPHEGSRADLVAEESPELLSPEPR. A helical membrane pass occupies residues 496-515; that stretch reads MITLGDGLHNFADGLAVGAA. The Zn(2+) site is built by His-504, Asn-505, and Asp-508. Over 516-523 the chain is Extracellular; the sequence is FASSWKTG. A helical transmembrane segment spans residues 524–550; it reads LATSLAVFCHEVPHELGDFAALLHAGL. Residues His-533, Glu-534, and His-537 each coordinate Zn(2+). Residues 551–555 are Cytoplasmic-facing; it reads PVSRA. The helical transmembrane segment at 556–576 threads the bilayer; that stretch reads LLLNLASGLTAFAGLYVALAL. Topologically, residues 577–583 are extracellular; it reads GVGEESE. The chain crosses the membrane as a helical span at residues 584 to 604; it reads SWTLAVAIGLFLYVALCDMLP. The Cytoplasmic segment spans residues 605-614; sequence AMLNVRDPRP. A helical transmembrane segment spans residues 615–635; that stretch reads WLLFLLHNVGLLGGWAVLLLL. Residues 636 to 644 lie on the Extracellular side of the membrane; the sequence is SLYEDSIAL.

This sequence belongs to the ZIP transporter (TC 2.A.5) family. In terms of assembly, homodimer. Post-translationally, the extracellular N-terminal ectodomain is cleaved when cells are Zn(2+) deficient, N-terminally cleaved SLC39A4 is internalized at a faster rate. Under excess Zn(2+) conditions, SLC39A4 on the cell surface is rapidly endocytosed, ubiquitinated and degraded. In terms of processing, glycosylated.

The protein localises to the cell membrane. It is found in the recycling endosome membrane. Its subcellular location is the apical cell membrane. The catalysed reaction is Zn(2+)(in) = Zn(2+)(out). Selective transporter that mediates the uptake of Zn(2+). Plays an essential role for dietary zinc uptake from small intestine. The Zn(2+) uniporter activity is regulated by zinc availability. Also exhibits polyspecific binding and transport of Cu(2+), Cd(2+) and possibly Ni(2+) but at higher concentrations. The protein is Zinc transporter ZIP4 of Pteropus alecto (Black flying fox).